Here is a 207-residue protein sequence, read N- to C-terminus: FMN-dependent NADH:quinone oxidoreductase 2 (207 aa).

FMN-binding positions include serine 9, 15–17 (SAS), and 97–100 (MWNF).

Belongs to the azoreductase type 1 family. In terms of assembly, homodimer. FMN is required as a cofactor.

It carries out the reaction 2 a quinone + NADH + H(+) = 2 a 1,4-benzosemiquinone + NAD(+). The catalysed reaction is N,N-dimethyl-1,4-phenylenediamine + anthranilate + 2 NAD(+) = 2-(4-dimethylaminophenyl)diazenylbenzoate + 2 NADH + 2 H(+). Functionally, quinone reductase that provides resistance to thiol-specific stress caused by electrophilic quinones. Also exhibits azoreductase activity. Catalyzes the reductive cleavage of the azo bond in aromatic azo compounds to the corresponding amines. This Burkholderia lata (strain ATCC 17760 / DSM 23089 / LMG 22485 / NCIMB 9086 / R18194 / 383) protein is FMN-dependent NADH:quinone oxidoreductase 2.